Here is a 71-residue protein sequence, read N- to C-terminus: UPF0346 protein BcerKBAB4_2120 (71 aa).

Belongs to the UPF0346 family.

The polypeptide is UPF0346 protein BcerKBAB4_2120 (Bacillus mycoides (strain KBAB4) (Bacillus weihenstephanensis)).